Here is a 325-residue protein sequence, read N- to C-terminus: uncharacterized protein (325 aa).

The tract at residues 1–75 (MSQPPEHPGN…PPPGYPTHLQ (75 aa)) is disordered. Pro residues predominate over residues 24–70 (YPPPGYGAPPPPPGYGPPPGTYLPPGYNAPPPPPGYGPPPGPPPPGY). Transmembrane regions (helical) follow at residues 96–116 (AVTLVVPVLAYAVALAAVIGA), 153–173 (IVMFLGYIALFALVLYMHAGI), 205–225 (LLIVAVTFIGGLLCVIPGLIF), and 273–293 (LVGELLCFVGMLIGIPVAALI).

Its subcellular location is the cell membrane. This is an uncharacterized protein from Mycobacterium tuberculosis (strain ATCC 25618 / H37Rv).